The primary structure comprises 291 residues: MFLLITYPVFDPVAISLGPIAIRWYALAYIGGIMLGWLYARALLKSEKLWGGPAPISGLQLDDFILWVTIGIILGGRTGYVLFYNLDFFIRHPAEIFEIWKGGMSFHGGFMGCVVAVILFCRKHGLPILSLGDVATAVGPIGLFLGRIANFINSELWGRPADPSLPWAMVFPNGGPLPRHPSQLYEATLEGLVLFTILALMIRAGALKRPGLVLGSFITLYAMARIAGEFFREPDPQLGFLWGGLTMGMLLSAPMIIAGLAIICVAWSRGPRAPVAQTISTPDVSTKADRD.

The next 4 membrane-spanning stretches (helical) occupy residues 24–44 (WYAL…RALL), 64–84 (FILW…VLFY), 99–119 (IWKG…AVIL), and 125–145 (GLPI…GLFL). R147 serves as a coordination point for a 1,2-diacyl-sn-glycero-3-phospho-(1'-sn-glycerol). 3 consecutive transmembrane segments (helical) span residues 187 to 207 (ATLE…AGAL), 211 to 231 (GLVL…GEFF), and 247 to 267 (MGML…CVAW).

The protein belongs to the Lgt family.

It localises to the cell inner membrane. The enzyme catalyses L-cysteinyl-[prolipoprotein] + a 1,2-diacyl-sn-glycero-3-phospho-(1'-sn-glycerol) = an S-1,2-diacyl-sn-glyceryl-L-cysteinyl-[prolipoprotein] + sn-glycerol 1-phosphate + H(+). The protein operates within protein modification; lipoprotein biosynthesis (diacylglyceryl transfer). Functionally, catalyzes the transfer of the diacylglyceryl group from phosphatidylglycerol to the sulfhydryl group of the N-terminal cysteine of a prolipoprotein, the first step in the formation of mature lipoproteins. The polypeptide is Phosphatidylglycerol--prolipoprotein diacylglyceryl transferase (Nitrobacter hamburgensis (strain DSM 10229 / NCIMB 13809 / X14)).